An 880-amino-acid polypeptide reads, in one-letter code: Alanine--tRNA ligase (880 aa).

H548, H552, C651, and H655 together coordinate Zn(2+).

This sequence belongs to the class-II aminoacyl-tRNA synthetase family. Zn(2+) serves as cofactor.

It localises to the cytoplasm. The enzyme catalyses tRNA(Ala) + L-alanine + ATP = L-alanyl-tRNA(Ala) + AMP + diphosphate. Catalyzes the attachment of alanine to tRNA(Ala) in a two-step reaction: alanine is first activated by ATP to form Ala-AMP and then transferred to the acceptor end of tRNA(Ala). Also edits incorrectly charged Ser-tRNA(Ala) and Gly-tRNA(Ala) via its editing domain. This chain is Alanine--tRNA ligase, found in Tropheryma whipplei (strain TW08/27) (Whipple's bacillus).